The primary structure comprises 150 residues: Transcription antitermination protein NusB (150 aa).

It belongs to the NusB family.

Its function is as follows. Involved in transcription antitermination. Required for transcription of ribosomal RNA (rRNA) genes. Binds specifically to the boxA antiterminator sequence of the ribosomal RNA (rrn) operons. The sequence is that of Transcription antitermination protein NusB from Streptococcus pyogenes serotype M4 (strain MGAS10750).